Consider the following 88-residue polypeptide: Putative membrane protein insertion efficiency factor (88 aa).

The protein belongs to the UPF0161 family.

It localises to the cell inner membrane. Functionally, could be involved in insertion of integral membrane proteins into the membrane. The chain is Putative membrane protein insertion efficiency factor from Burkholderia vietnamiensis (strain G4 / LMG 22486) (Burkholderia cepacia (strain R1808)).